Reading from the N-terminus, the 494-residue chain is NAD(+) hydrolase ThsA (494 aa).

The region spanning alanine 11–lysine 295 is the Deacetylase sirtuin-type domain. Positions 30, 119, and 157 each coordinate NAD(+). Residue histidine 157 is the Proton acceptor of the active site. Residues isoleucine 296–arginine 494 form an SLOG (STALD) domain, binds 3'cADPR region. 3'cADPR is bound by residues glycine 300, serine 301, leucine 339, phenylalanine 370, arginine 388, lysine 405, glycine 416, and glutamate 420.

It belongs to the soluble Thoeris ThsA family. Homotetramer.

It is found in the cytoplasm. It catalyses the reaction NAD(+) + H2O = ADP-D-ribose + nicotinamide + H(+). Its activity is regulated as follows. Probably activated by a signal molecule generated by endogenous ThsB1 and/or ThsB2. Can also be activated by the signal generated by ThsB of B.cereus. The activating molecule might be 3' cyclic ADP-D-ribose (3'cADPR). Its function is as follows. Probable NAD(+) hydrolyzing component (NADase) of the Thoeris antiviral defense system, composed of ThsA, TIR1 (thsB1) and TIR2 (thsB2). Activated by a signal molecule generated by endogenous TIR1, TIR2 or ThsB from B.cereus. After activation it binds and hydrolyzes NAD(+), leading to cell death and inhibition of phage replication. Expression of Thoeris in B.subtilis (strain BEST7003) confers resistance to phages phi29, phi3T, SPBeta, SBSphi11, SBSphi13, SBSphiJ, SPO1 and SPR but not SBSphiC. The TIR paralogs confer overlapping resistance to different phages. This is NAD(+) hydrolase ThsA from Cytobacillus dafuensis (Bacillus dafuensis).